The sequence spans 352 residues: B1 bradykinin receptor (352 aa).

Topologically, residues 1–41 (MAAQTLLELQPSNQSQLSALNTTSCDNAREAWDLLYQVLPI) are extracellular. Residues N13 and N21 are each glycosylated (N-linked (GlcNAc...) asparagine). A helical membrane pass occupies residues 42 to 62 (FILTICAFGLLGNLFVLSVFL). Topologically, residues 63–72 (LLRRRLTVAE) are cytoplasmic. The chain crosses the membrane as a helical span at residues 73–93 (IYLVNLAASDLVFVLGLPFWA). The Extracellular portion of the chain corresponds to 94-110 (QNIWNQFNWPFGDLLCR). C109 and C188 are oxidised to a cystine. A helical transmembrane segment spans residues 111 to 131 (VVNGVIKANLFISIFLMVAIS). At 132-153 (QDRYCVLVHPMASRRRRRRRRA) the chain is on the cytoplasmic side. The helical transmembrane segment at 154-174 (RATCMVIWAVGALLSTPTFLL) threads the bilayer. Over 175 to 206 (RSVSAVQDLNISACILLLPHQAWHVARIVELN) the chain is Extracellular. An N-linked (GlcNAc...) asparagine glycan is attached at N184. The helical transmembrane segment at 207 to 227 (VLGFLLPLAAIIFFNGHILAS) threads the bilayer. Residues 228–250 (LRGQGEVSQTRIGGPKDCKTTVL) are Cytoplasmic-facing. The helical transmembrane segment at 251–271 (ILTLVAAFLVCWAPYHCFAFL) threads the bilayer. At 272-294 (EFLFQVRAVRGCFWEDFIDLGLQ) the chain is on the extracellular side. The chain crosses the membrane as a helical span at residues 295–315 (LANFFAFTNSCLNPVIYVFVG). Over 316 to 326 (RLFRTKVWELY) the chain is Cytoplasmic. Residue C329 is the site of S-palmitoyl cysteine attachment.

Belongs to the G-protein coupled receptor 1 family. Bradykinin receptor subfamily. BDKRB1 sub-subfamily.

The protein resides in the cell membrane. This is a receptor for bradykinin. Could be a factor in chronic pain and inflammation. The sequence is that of B1 bradykinin receptor (BDKRB1) from Tupaia minor (Pigmy tree shrew).